The sequence spans 124 residues: Small ribosomal subunit protein uS13 (124 aa).

The tract at residues 94-124 (KGLPVRGQRTKTNARTRKGPKRTVAGKKKAR) is disordered.

The protein belongs to the universal ribosomal protein uS13 family. In terms of assembly, part of the 30S ribosomal subunit. Forms a loose heterodimer with protein S19. Forms two bridges to the 50S subunit in the 70S ribosome.

Its function is as follows. Located at the top of the head of the 30S subunit, it contacts several helices of the 16S rRNA. In the 70S ribosome it contacts the 23S rRNA (bridge B1a) and protein L5 of the 50S subunit (bridge B1b), connecting the 2 subunits; these bridges are implicated in subunit movement. Contacts the tRNAs in the A and P-sites. This chain is Small ribosomal subunit protein uS13, found in Pseudarthrobacter chlorophenolicus (strain ATCC 700700 / DSM 12829 / CIP 107037 / JCM 12360 / KCTC 9906 / NCIMB 13794 / A6) (Arthrobacter chlorophenolicus).